A 407-amino-acid polypeptide reads, in one-letter code: Putative membrane protein 047R (407 aa).

The interval 265 to 337 is disordered; that stretch reads INCVFKPDPP…PPKPTPPPPI (73 aa). Over residues 271–337 the composition is skewed to pro residues; sequence PDPPPQPKPQ…PPKPTPPPPI (67 aa). A run of 2 helical transmembrane segments spans residues 355–372 and 385–403; these read NWIMLTFVGLVLALVIYP and NAAIAVLVGLNAFGLQSYV.

Belongs to the IIV-6 337L family.

The protein resides in the virion membrane. In Aedes vexans (Inland floodwater mosquito), this protein is Putative membrane protein 047R.